We begin with the raw amino-acid sequence, 98 residues long: NADH-ubiquinone oxidoreductase chain 4L (98 aa).

3 consecutive transmembrane segments (helical) span residues 1–21, 29–49, and 58–78; these read MPII…GMLI, SLLC…LMAL, and IVPI…LALL.

This sequence belongs to the complex I subunit 4L family. In terms of assembly, core subunit of respiratory chain NADH dehydrogenase (Complex I) which is composed of 45 different subunits.

The protein localises to the mitochondrion inner membrane. The enzyme catalyses a ubiquinone + NADH + 5 H(+)(in) = a ubiquinol + NAD(+) + 4 H(+)(out). Functionally, core subunit of the mitochondrial membrane respiratory chain NADH dehydrogenase (Complex I) which catalyzes electron transfer from NADH through the respiratory chain, using ubiquinone as an electron acceptor. Part of the enzyme membrane arm which is embedded in the lipid bilayer and involved in proton translocation. This chain is NADH-ubiquinone oxidoreductase chain 4L (MT-ND4L), found in Colobus guereza (Mantled guereza).